The sequence spans 142 residues: ATP synthase epsilon chain (142 aa).

It belongs to the ATPase epsilon chain family. As to quaternary structure, F-type ATPases have 2 components, CF(1) - the catalytic core - and CF(0) - the membrane proton channel. CF(1) has five subunits: alpha(3), beta(3), gamma(1), delta(1), epsilon(1). CF(0) has three main subunits: a, b and c.

The protein localises to the cell inner membrane. Its function is as follows. Produces ATP from ADP in the presence of a proton gradient across the membrane. This is ATP synthase epsilon chain from Shewanella denitrificans (strain OS217 / ATCC BAA-1090 / DSM 15013).